The chain runs to 377 residues: UDP-N-acetylglucosamine 2-epimerase (377 aa).

H212 is an active-site residue.

It belongs to the UDP-N-acetylglucosamine 2-epimerase family. In terms of assembly, homodimer.

The enzyme catalyses UDP-N-acetyl-alpha-D-glucosamine + H2O = aldehydo-N-acetyl-D-mannosamine + UDP + H(+). In terms of biological role, catalyzes the conversion of UDP-N-acetylglucosamine (UDP-GlcNAc) to UDP and N-acetyl-D-mannosamine (ManNAc). The sequence is that of UDP-N-acetylglucosamine 2-epimerase (siaA) from Neisseria meningitidis serogroup B (strain ATCC BAA-335 / MC58).